Consider the following 194-residue polypeptide: dCTP deaminase (194 aa).

DCTP contacts are provided by residues 110–115 (RSSLAR), D128, 136–138 (VLE), Y171, K178, and Q182. The active-site Proton donor/acceptor is the E138. The interval 175–194 (KDAKYKNQQSAVSSRINQDD) is disordered. Polar residues predominate over residues 180 to 194 (KNQQSAVSSRINQDD).

The protein belongs to the dCTP deaminase family. Homotrimer.

The catalysed reaction is dCTP + H2O + H(+) = dUTP + NH4(+). The protein operates within pyrimidine metabolism; dUMP biosynthesis; dUMP from dCTP (dUTP route): step 1/2. Catalyzes the deamination of dCTP to dUTP. This chain is dCTP deaminase, found in Actinobacillus pleuropneumoniae serotype 5b (strain L20).